Here is a 147-residue protein sequence, read N- to C-terminus: Hemoglobin subunit gamma (147 aa).

The Globin domain maps to 3-147 (NFTAEDKAAI…VASALASRYH (145 aa)). H64 and H93 together coordinate heme b.

This sequence belongs to the globin family. In terms of assembly, heterotetramer of two alpha chains and two gamma chains in fetal hemoglobin (Hb F). In terms of tissue distribution, red blood cells.

Functionally, gamma chains make up the fetal hemoglobin F, in combination with alpha chains. The sequence is that of Hemoglobin subunit gamma (HBG) from Alouatta seniculus (Red howler monkey).